The chain runs to 34 residues: Ribonuclease PL1 (34 aa).

The N-linked (GlcNAc...) asparagine; partial glycan is linked to Asn-4. His-15 (proton acceptor) is an active-site residue.

Belongs to the pancreatic ribonuclease family.

It is found in the lysosome. The enzyme catalyses an [RNA] containing cytidine + H2O = an [RNA]-3'-cytidine-3'-phosphate + a 5'-hydroxy-ribonucleotide-3'-[RNA].. It catalyses the reaction an [RNA] containing uridine + H2O = an [RNA]-3'-uridine-3'-phosphate + a 5'-hydroxy-ribonucleotide-3'-[RNA].. The chain is Ribonuclease PL1 from Sus scrofa (Pig).